Reading from the N-terminus, the 175-residue chain is Short chain dehydrogenase/reductase dpmpG (175 aa).

Positions 18, 71, 98, and 132 each coordinate NADP(+).

It belongs to the short-chain dehydrogenases/reductases (SDR) family.

The protein operates within secondary metabolite biosynthesis; terpenoid biosynthesis. Short chain dehydrogenase/reductase; part of the gene cluster that mediates the biosynthesis of diterpenoid pyrones. The first step of the pathway is the synthesis of the alpha-pyrone moiety by the polyketide synthase dpmpA via condensation of one acetyl-CoA starter unit with 3 malonyl-CoA units and 2 methylations. The alpha-pyrone is then combined with geranylgeranyl pyrophosphate (GGPP) formed by the GGPP synthase dpmpD through the action of the prenyltransferase dpmpC to yield a linear alpha-pyrone diterpenoid. Subsequent steps in the diterpenoid pyrone biosynthetic pathway involve the decalin core formation, which is initiated by the epoxidation of the C10-C11 olefin by the FAD-dependent oxidoreductase dpmpE, and is followed by a cyclization cascade catalyzed by the terpene cyclase dpmpB. The short chain dehydrogenase/reductase dpmpG then oxidizes the 8S hydroxy group to a ketone and the short chain dehydrogenase/reductase dpmpH reduces the ketone to the 8R hydroxy group to yield higginsianin B. Higginsianin B is further methylated by the methyltransferase dpmpI to produce the intermediate named FDDP B. The cytochrome P450 monooxygenase dpmpJ then oxidizes the C-26 methyl to primary alcohol, producing the final diterpenoid pyrone with a C-26 primary alcohol on the gamma-pyrone moiety named FDDP C. The polypeptide is Short chain dehydrogenase/reductase dpmpG (Macrophomina phaseolina (strain MS6) (Charcoal rot fungus)).